A 485-amino-acid chain; its full sequence is Bindin (485 aa).

An N-terminal signal peptide occupies residues 1 to 20; that stretch reads MGFHQISVIIVVLALASARA. The propeptide occupies 21-247; it reads ADEFPSHTDT…DSERGARKKR (227 aa). Disordered regions lie at residues 157–195, 219–273, and 305–331; these read GETR…DLAP, ISGH…PAQQ, and GGGQ…SDSL. Positions 172 to 192 are enriched in basic and acidic residues; that stretch reads DVSKRASPRKGDEPAGHKLKD. Polar residues predominate over residues 250-264; it reads NQGNYPQAMNPQSRG. The span at 317 to 331 shows a compositional bias: acidic residues; the sequence is AEADNADYDEYSDSL. Residues 371–379 form a fucose-binding domain region; the sequence is LRHLRHHSN. Residues 459–485 form a disordered region; the sequence is QQGMGGVPQRMGGQPQGNAYNQGYRQG. Over residues 465–475 the composition is skewed to low complexity; that stretch reads VPQRMGGQPQG. The span at 476–485 shows a compositional bias: polar residues; it reads NAYNQGYRQG.

It belongs to the bindin family.

The protein localises to the cytoplasmic vesicle. The protein resides in the secretory vesicle. It localises to the acrosome lumen. Its function is as follows. Species-specific sea urchin sperm protein required for adhesion of sperm to the egg surface during fertilization. Bindin coats the acrosomal process after it is externalized by the acrosome reaction. It binds to sulfated, fucose-containing polysaccharides on the vitelline layer receptor proteoglycans which cover the egg plasma membrane. This is Bindin from Mesocentrotus franciscanus (Giant red sea urchin).